The following is a 702-amino-acid chain: Rho GTPase-activating protein 22 (702 aa).

The PH domain occupies 43 to 151 (PVLKAGWLRK…WVQAIRRVIW (109 aa)). In terms of domain architecture, Rho-GAP spans 161–355 (QRLEDTVHHE…VLIRKHGQLF (195 aa)). Disordered stretches follow at residues 360 to 433 (LEEP…HTLP), 438 to 457 (SFRQ…SSLE), 480 to 511 (RASS…FSST), and 555 to 596 (PSPL…TQAH). Phosphoserine occurs at positions 365 and 397. Polar residues-rich tracts occupy residues 407-421 (SRTS…TGPA), 438-456 (SFRQ…NSSL), 491-504 (GSAQ…NVPP), and 581-594 (SGSS…SPTQ). Residues 594–691 (QAHVRRCRAL…EEFFSTLGSL (98 aa)) are a coiled coil.

In terms of assembly, interacts with VEZF1. As to expression, predominantly present in endothelial cells (at protein level).

It localises to the cytoplasm. Its subcellular location is the nucleus. In terms of biological role, rho GTPase-activating protein involved in the signal transduction pathway that regulates endothelial cell capillary tube formation during angiogenesis. Acts as a GTPase activator for the RAC1 by converting it to an inactive GDP-bound state. Inhibits RAC1-dependent lamellipodia formation. May also play a role in transcription regulation via its interaction with VEZF1, by regulating activity of the endothelin-1 (EDN1) promoter. This chain is Rho GTPase-activating protein 22 (Arhgap22), found in Mus musculus (Mouse).